Consider the following 57-residue polypeptide: Thiocillin GE37468 (57 aa).

Residues 1–42 constitute a propeptide, removed in mature form; the sequence is MGNNEEYFIDVNDLSIDVFDVVEQGGAVTALTADHGMPEVGA. Positions 43 to 44 form a cross-link, 5-methyloxazole-4-carboxylic acid (Ser-Thr); the sequence is ST. Residues 43–52 constitute a cross-link (pyridine-2,5-dicarboxylic acid (Ser-Cys) (with S-53)); sequence STNCFCYICC. Positions 43-53 form a cross-link, pyridine-2,5-dicarboxylic acid (Ser-Ser) (with C-52); it reads STNCFCYICCS. A cross-link (thiazole-4-carboxylic acid (Asn-Cys)) is located at residues 45 to 46; the sequence is NC. Residues 47–48 constitute a cross-link (thiazoline-4-carboxylic acid (Phe-Cys)); it reads FC. Position 50 is a 5-hydroxy-3-methylproline (Ile) (isoleucine 50). A cross-link (thiazole-4-carboxylic acid (Ile-Cys)) is located at residues 50–51; sequence IC. Residues 51-52 constitute a cross-link (thiazole-4-carboxylic acid (Cys-Cys)); the sequence is CC. Residues 53–54 constitute a cross-link (thiazole-4-carboxylic acid (Ser-Cys)); that stretch reads SC. A 2,3-didehydroalanine (Ser) mark is found at serine 55 and serine 56. Position 57 (asparagine 57) is a propeptide, removed in mature form.

Post-translationally, maturation of thiazole and oxazole containing antibiotics involves the enzymatic condensation of a Cys, Ser or Thr with the alpha-carbonyl of the preceding amino acid to form a thioether or ether bond, then dehydration to form a double bond with the alpha-amino nitrogen. Thiazoline or oxazoline ring are dehydrogenated to form thiazole or oxazole rings. In terms of processing, maturation of pyridinyl containing antibiotics involves the cross-linking of a Ser and a Cys-Ser pair usually separated by 7 or 8 residues along the peptide chain. The Ser residues are dehydrated to didehydroalanines, then bonded between their beta carbons. The alpha carbonyl of the Cys condenses with alpha carbon of the first Ser to form a pyridinyl ring. The ring may be multiply dehydrogenated to form a pyridine ring with loss of the amino nitrogen of the first Ser.

Its subcellular location is the secreted. Functionally, has bacteriocidal activity against both aerobic and anaerobic Gram-positive bacteria. Inhibits growth of B.subtilis (MIC=0.047 ug/ml) and methicillin-resistant S.aureus (MRSA) (MIC=0.047 ug/ml). Has poor activity against Gram-negative bacteria, with the exception of B.fragilis. Inhibits bacterial protein biosynthesis by acting on elongation factor Tu (EF-Tu). Full antibiotic activity depends on the presence of the modified residue Ile-50. This chain is Thiocillin GE37468 (getA), found in Streptomyces sp.